A 277-amino-acid polypeptide reads, in one-letter code: Diaminopimelate epimerase (277 aa).

Residues Asn-11 and Asn-72 each coordinate substrate. The active-site Proton donor is Cys-81. Residues 82–83 (GN), Asn-189, and 207–208 (ER) contribute to the substrate site. The Proton acceptor role is filled by Cys-217. Residue 218–219 (GT) coordinates substrate.

The protein belongs to the diaminopimelate epimerase family. Homodimer.

The protein resides in the cytoplasm. It catalyses the reaction (2S,6S)-2,6-diaminopimelate = meso-2,6-diaminopimelate. It functions in the pathway amino-acid biosynthesis; L-lysine biosynthesis via DAP pathway; DL-2,6-diaminopimelate from LL-2,6-diaminopimelate: step 1/1. Its function is as follows. Catalyzes the stereoinversion of LL-2,6-diaminopimelate (L,L-DAP) to meso-diaminopimelate (meso-DAP), a precursor of L-lysine and an essential component of the bacterial peptidoglycan. The polypeptide is Diaminopimelate epimerase (Hydrogenobaculum sp. (strain Y04AAS1)).